A 369-amino-acid chain; its full sequence is Delta(6)-protoilludene synthase STEHIDRAFT_73029 (369 aa).

Positions 107, 243, 247, and 251 each coordinate Mg(2+). A D(D/E)XX(D/E) motif motif is present at residues 107 to 111 (DEYSD). The NSE motif signature appears at 243–251 (NDIVSYNLE). (2E,6E)-farnesyl diphosphate-binding residues include Arg333 and Tyr334.

This sequence belongs to the terpene synthase family. It depends on Mg(2+) as a cofactor. Requires Mn(2+) as cofactor. The cofactor is Ca(2+). Ni(2+) is required as a cofactor. Co(2+) serves as cofactor.

The catalysed reaction is (2E,6E)-farnesyl diphosphate = Delta(6)-protoilludene + diphosphate. The enzyme catalyses (2E,6E)-farnesyl diphosphate = alpha-selinene + diphosphate. With respect to regulation, ca(2+) switches the cyclization mechanism of delta(6)-protoilludene synthase from 1,11 to 1,10 cyclization which leads to the production of beta-elemene. Its function is as follows. Terpene cyclase that catalyzes the cyclization of farnesyl diphosphate (FPP) to delta(6)-protoilludene. In presence of Ca(2+), a significant switch from 1,11 to a dual 1,11/1,10 cyclization occurs, producing beta-elemene as the major product, with lower levels of delta(6)-protoilludene and (E)-beta-caryophyllene, and traces of beta-selinene and alpha-selinene. The polypeptide is Delta(6)-protoilludene synthase STEHIDRAFT_73029 (Stereum hirsutum (strain FP-91666) (White-rot fungus)).